Here is a 469-residue protein sequence, read N- to C-terminus: UDP-N-acetylmuramate--L-alanine ligase (469 aa).

114 to 120 (GTHGKTT) is an ATP binding site.

Belongs to the MurCDEF family.

Its subcellular location is the cytoplasm. The enzyme catalyses UDP-N-acetyl-alpha-D-muramate + L-alanine + ATP = UDP-N-acetyl-alpha-D-muramoyl-L-alanine + ADP + phosphate + H(+). Its pathway is cell wall biogenesis; peptidoglycan biosynthesis. Functionally, cell wall formation. The sequence is that of UDP-N-acetylmuramate--L-alanine ligase from Sinorhizobium fredii (strain NBRC 101917 / NGR234).